Reading from the N-terminus, the 420-residue chain is MKLLVVGSGGREHAIAKKLLESEQVEQVFVAPGNDGMTLDGIELINIGISEHSALINFAKENDIAWTFVGPDDALAAGIVDDFEQAGLKAFGPSRLAAELEWSKDFAKQIMVKYGIPTAAFGTFSNFEEAKAYIEEQGAPIVVKADGLALGKGVVVAETVEQAVEAAREMLLDNKFGDSGARVVIEEFLAGEEFSLFALVNGDQFYILPTAQDHKRAFDGDQGPNTGGMGAYVHVPHLPQSVVDTAVDTIVKPILEGMITEGRSYLGVLYAGLILTDQGPKVIEFNARFGDPETQIILPRLTSDFAQNIDDILHKRPTQLTWLNSGVTLGVVVASNGYPLDYEKGVTLPAKTEGDITTYYAGARFAENSRALLSNGGRVYMLVTTADTVQDAQEKIYSELKNQDTTGLFYRTDIGSKAVK.

The ATP-grasp domain maps to Lys-108–His-314. Ile-134–Ser-195 serves as a coordination point for ATP. Mg(2+)-binding residues include Glu-284 and Asn-286.

It belongs to the GARS family. The cofactor is Mg(2+). Mn(2+) serves as cofactor.

The catalysed reaction is 5-phospho-beta-D-ribosylamine + glycine + ATP = N(1)-(5-phospho-beta-D-ribosyl)glycinamide + ADP + phosphate + H(+). It functions in the pathway purine metabolism; IMP biosynthesis via de novo pathway; N(1)-(5-phospho-D-ribosyl)glycinamide from 5-phospho-alpha-D-ribose 1-diphosphate: step 2/2. In Streptococcus suis, this protein is Phosphoribosylamine--glycine ligase.